Here is a 443-residue protein sequence, read N- to C-terminus: Xaa-Pro dipeptidase (443 aa).

Residues Asp241, Asp252, His333, Glu378, and Glu417 each contribute to the Mn(2+) site.

Belongs to the peptidase M24B family. Bacterial-type prolidase subfamily. The cofactor is Mn(2+).

The enzyme catalyses Xaa-L-Pro dipeptide + H2O = an L-alpha-amino acid + L-proline. Its function is as follows. Splits dipeptides with a prolyl residue in the C-terminal position. The polypeptide is Xaa-Pro dipeptidase (Actinobacillus pleuropneumoniae serotype 5b (strain L20)).